The sequence spans 291 residues: Trimeric intracellular cation channel type B (291 aa).

At 1–15 the chain is on the lumenal side; sequence MESPWNELTLAFSRT. A helical transmembrane segment spans residues 16-33; sequence SMFPFFDIAHYLVSVMAL. Residues 34–47 lie on the Cytoplasmic side of the membrane; the sequence is KHQPGAAALAWKNP. A helical transmembrane segment spans residues 48 to 69; it reads LSSWFTAMLHCFGGGILSCVLL. Residues 70–80 are Lumenal-facing; the sequence is AEPPLRFLANN. The chain crosses the membrane as a helical span at residues 81-100; sequence TNILLASSIWYIAFFCPCDL. Over 101–103 the chain is Cytoplasmic; the sequence is ISQ. Residues 104-122 form a helical membrane-spanning segment; sequence AYSFLPVQLLAAGMKEVTR. 2 residues coordinate a 1,2-diacyl-sn-glycero-3-phospho-(1D-myo-inositol-4,5-bisphosphate): K118 and R122. The Lumenal portion of the chain corresponds to 123-138; sequence TWKIVGGVTHANSYYK. A helical transmembrane segment spans residues 139 to 156; that stretch reads NGWIVMIAVGWARGAGGS. At 157-179 the chain is on the cytoplasmic side; the sequence is IITNFEQLVKGCWKPEAEEWLKM. The helical transmembrane segment at 180–196 threads the bilayer; the sequence is SYPAKVTLLGSVIFTFQ. Residues 197–207 lie on the Lumenal side of the membrane; that stretch reads QTKYLAISKHN. The chain crosses the membrane as a helical span at residues 208–225; the sequence is LMFLFTVFLVATKITMMI. Topologically, residues 226–291 are cytoplasmic; that stretch reads TKTALVPFAC…VKKKHSKKTE (66 aa). The tract at residues 257 to 291 is disordered; it reads KSETKSSFNGTGSSTSKPVANASDKVKKKHSKKTE. Residues 261 to 274 show a composition bias toward polar residues; that stretch reads KSSFNGTGSSTSKP. S262 carries the phosphoserine modification. The segment covering 282-291 has biased composition (basic residues); that stretch reads VKKKHSKKTE.

Belongs to the TMEM38 family. Homotrimer; conformation seems to be controled by binding to diacylglycerol (DAG).

It is found in the endoplasmic reticulum membrane. It carries out the reaction K(+)(in) = K(+)(out). With respect to regulation, channel activity is activated by increased cytosolic Ca(2+) levels and blocked by luminal high Ca(2+) levels. Functionally, intracellular monovalent cation channel required for maintenance of rapid intracellular calcium release. Acts as a potassium counter-ion channel that functions in synchronization with calcium release from intracellular stores. Activated by increased cytosolic Ca(2+) levels. The protein is Trimeric intracellular cation channel type B (TMEM38B) of Bos taurus (Bovine).